Reading from the N-terminus, the 277-residue chain is Sulfur carrier protein FdhD (277 aa).

The Cysteine persulfide intermediate role is filled by Cys-123.

It belongs to the FdhD family.

It is found in the cytoplasm. Its function is as follows. Required for formate dehydrogenase (FDH) activity. Acts as a sulfur carrier protein that transfers sulfur from IscS to the molybdenum cofactor prior to its insertion into FDH. This is Sulfur carrier protein FdhD from Pectobacterium atrosepticum (strain SCRI 1043 / ATCC BAA-672) (Erwinia carotovora subsp. atroseptica).